A 215-amino-acid chain; its full sequence is Cytochrome b6 (215 aa).

Residues 32-52 (IFYCLGGITLTCFLVQVATGF) traverse the membrane as a helical segment. Cys35 contributes to the heme c binding site. Residues His86 and His100 each contribute to the heme b site. A run of 3 helical transmembrane segments spans residues 90–110 (ASMMVLMMILHVFRVYLTGGF), 116–136 (LTWVTGVVLGVLTATFGVTGY), and 186–206 (LHTFVLPLLTAVFMLMHFLMI). Residues His187 and His202 each contribute to the heme b site.

Belongs to the cytochrome b family. PetB subfamily. The 4 large subunits of the cytochrome b6-f complex are cytochrome b6, subunit IV (17 kDa polypeptide, PetD), cytochrome f and the Rieske protein, while the 4 small subunits are PetG, PetL, PetM and PetN. The complex functions as a dimer. The cofactor is heme b. Heme c serves as cofactor.

Its subcellular location is the plastid. The protein resides in the chloroplast thylakoid membrane. Component of the cytochrome b6-f complex, which mediates electron transfer between photosystem II (PSII) and photosystem I (PSI), cyclic electron flow around PSI, and state transitions. In Pisum sativum (Garden pea), this protein is Cytochrome b6.